Consider the following 62-residue polypeptide: Delta-theraphotoxin-Cg1a 1 (62 aa).

The first 21 residues, Met1–Ala21, serve as a signal peptide directing secretion. Residues Thr22–Arg29 constitute a propeptide that is removed on maturation. Intrachain disulfides connect Cys31-Cys46, Cys38-Cys51, and Cys45-Cys58.

Belongs to the neurotoxin 10 (Hwtx-1) family. 33 (Jztx-1) subfamily. As to expression, expressed by the venom gland.

It is found in the secreted. Functionally, inhibits voltage-gated sodium channels, preferentially subtype Nav1.5/SCN5A (in cardiac myocytes), but also Nav1.6/SCN8A and Nav1.7/SCN9A (TTX-sensitive Nav in rat DRG neurons) and invertebrate Nav (in insect neurons) as well as voltage-gated potassium channels of the subtype Kv2.1/KCNB1. Is suggested to bind to site 3 of the sodium channels and inhibit the inactivation of the activated channels, thereby blocking neuronal transmission. On potassium channels, inhibits activation of channels with an IC(50) of 8.05 uM through a voltage sensor-trapping mechanism. Increases muscle contraction in several assays (mouse phrenic nerve-diaphragm, toad heart, rat vas deferens) and is suggested to act both presynaptically and postsynaptically. In terms of biological role, moderately inhibits voltage-gated sodium channels and weakly inhibits voltage-gated potassium channel. Inhibits the inactivation of rat Nav1.2/SCN2A (IC(50)=870 nM), rat Nav1.3/SCN3A (IC(50)=845 nM), rat Nav1.4/SCN4A (IC(50)=339 nM), human Nav1.5/SCN5A (IC(50)=335 nM) and human Nav1.7/SCN9A sodium channels (IC(50)=348 nM). The toxin delays the inactivation of sodium channels without affecting the activation and steady-state inactivation kinetics in the physiological range of voltages. Site-directed mutagenesis of the sodium channel indicates that the toxin interacts with site 3 located at the extracellular S3-S4 linker of domain IV. On potassium channels, it inhibits activation of channels with an IC(50) of 8.05 uM through a voltage sensor-trapping mechanism. It increases muscle contraction in several assays (mouse phrenic nerve-diaphragm, toad heart, rat vas deferens) and is suggested to act both presynaptically and postsynaptically. The protein is Delta-theraphotoxin-Cg1a 1 of Chilobrachys guangxiensis (Chinese earth tiger tarantula).